Consider the following 114-residue polypeptide: Large ribosomal subunit protein uL22 (114 aa).

The protein belongs to the universal ribosomal protein uL22 family. As to quaternary structure, part of the 50S ribosomal subunit.

Functionally, this protein binds specifically to 23S rRNA; its binding is stimulated by other ribosomal proteins, e.g. L4, L17, and L20. It is important during the early stages of 50S assembly. It makes multiple contacts with different domains of the 23S rRNA in the assembled 50S subunit and ribosome. Its function is as follows. The globular domain of the protein is located near the polypeptide exit tunnel on the outside of the subunit, while an extended beta-hairpin is found that lines the wall of the exit tunnel in the center of the 70S ribosome. This is Large ribosomal subunit protein uL22 from Desulfitobacterium hafniense (strain DSM 10664 / DCB-2).